The chain runs to 482 residues: Protein farnesyltransferase subunit beta (482 aa).

PFTB repeat units follow at residues 131–172 (ESNA…VTLG), 182–223 (REKM…SILN), 230–271 (TQGL…ILIN), and 278–319 (LDSL…VLLQ). (2E,6E)-farnesyl diphosphate contacts are provided by residues 256-259 (HGGY) and 298-301 (RTNK). The Zn(2+) site is built by Asp304 and Cys306. 307–310 (YTFW) serves as a coordination point for (2E,6E)-farnesyl diphosphate. The interval 329-372 (VHGSSHISEGTNEEHHAHDEDDLEDSDDDDDSDEDNDEDSVNGH) is disordered. Positions 348–368 (EDDLEDSDDDDDSDEDNDEDS) are enriched in acidic residues. The stretch at 391–433 (SLGLQRYVLLCSKIPDGGFRDKPRKPRDFYHTCYCLSGLSVAQ) is one PFTB 5 repeat. His421 serves as a coordination point for Zn(2+).

Belongs to the protein prenyltransferase subunit beta family. In terms of assembly, heterodimer of FTA and FTB (farnesyltransferase). Heterodimer of an alpha and a beta subunit. Zn(2+) serves as cofactor.

It catalyses the reaction L-cysteinyl-[protein] + (2E,6E)-farnesyl diphosphate = S-(2E,6E)-farnesyl-L-cysteinyl-[protein] + diphosphate. Functionally, catalyzes the transfer of a farnesyl moiety from farnesyl diphosphate to a cysteine at the fourth position from the C-terminus of several proteins having the C-terminal sequence Cys-aliphatic-aliphatic-X (CaaX). The beta subunit is responsible for peptide-binding. Acts as an abscisic acid (ABA) negative regulator by mediating ASG2 farnesylation and consequently monitoring its subcellular localization. Involved in responses to salt (NaCl) and osmotic (e.g. in response to mannitol and PEG) stresses. In Arabidopsis thaliana (Mouse-ear cress), this protein is Protein farnesyltransferase subunit beta (FTB).